The chain runs to 83 residues: U5-theraphotoxin-Hs1b 1 (83 aa).

A signal peptide spans 1 to 21 (MKTSMFLTLTGLVLLFVVCYA). The propeptide occupies 22 to 49 (SESEEKEFPKELLSSIFAADSDFKEEER). Cystine bridges form between C51–C63, C56–C68, and C62–C75.

The protein belongs to the neurotoxin 10 (Hwtx-1) family. 51 (Hntx-8) subfamily. Hntx-8 sub-subfamily. In terms of tissue distribution, expressed by the venom gland.

Its subcellular location is the secreted. Functionally, weakly inhibits 5HT3A receptors and Kv1.3/KCNA3 voltage-gated potassium channels. Agglutinates erythrocytes. In Cyriopagopus schmidti (Chinese bird spider), this protein is U5-theraphotoxin-Hs1b 1.